Here is a 500-residue protein sequence, read N- to C-terminus: Metacaspase-5 (500 aa).

An N-terminal signal peptide occupies residues 1-18; it reads MDAALALLFGQVATAVLP. Residues 19-63 form an important for catalytic activity region; it reads YVVNSIGRVPRPKRVDVKKAMGEAHQCRPVVPYRAPRPYTEGRVK. N-linked (GlcNAc...) asparagine glycans are attached at residues Asn-70 and Asn-113. His-147 is an active-site residue. The Ca(2+) site is built by Asp-162, Asp-178, and Asp-179. Cys-202 is a catalytic residue. Asp-209 contacts Ca(2+). Asn-219, Asn-235, Asn-258, Asn-264, Asn-283, and Asn-332 each carry an N-linked (GlcNAc...) asparagine glycan. Disordered regions lie at residues 358-419 and 444-500; these read EATL…QAYY and QPPQ…PGRK. Residues 379–389 are compositionally biased toward polar residues; the sequence is ASTSNGKSNPG. The span at 444–461 shows a compositional bias: low complexity; it reads QPPQQAYYQPPQQAYYQP.

The protein belongs to the peptidase C14B family.

The protein resides in the recycling endosome. Its function is as follows. Cysteine protease that cleaves specifically after arginine or lysine residues. The polypeptide is Metacaspase-5 (Trypanosoma brucei brucei).